The chain runs to 413 residues: Probable aminotransferase sirI (413 aa).

Lys255 carries the N6-(pyridoxal phosphate)lysine modification.

Belongs to the class-I pyridoxal-phosphate-dependent aminotransferase family. Pyridoxal 5'-phosphate serves as cofactor.

It participates in mycotoxin biosynthesis. Probable aminotransferase; part of the gene cluster that mediates the biosynthesis of sirodesmin PL, an epipolythiodioxopiperazine (ETP) characterized by a disulfide bridged cyclic dipeptide and that acts as a phytotoxin which is involved in the blackleg didease of canola. SirD catalyzes the O-prenylation of L-tyrosine (L-Tyr) in the presence of dimethylallyl diphosphate (DMAPP) to yield 4-O-dimethylallyl-L-Tyr, and therefore represents probably the first pathway-specific enzyme in the biosynthesis of sirodesmin PL. 4-O-dimethylallyl-L-Tyr, then undergoes condensation with L-Ser in a reaction catalyzed by the non-ribosomal peptide synthase sirP to form the diketopiperazine (DKP) backbone. Further bishydroxylation of the DKP performed by the cytochrome P450 monooxygenase sirC leads to the production of the intermediate phomamide. This step is essential to form the reactive thiol group required for toxicity of sirodesmin PL. The next steps of sirodesmin biosynthesis are not well understood yet, but some predictions could be made from intermediate compounds identification. Phomamide is converted into phomalizarine via oxidation, probably by sirT. Further oxidation, methylation (by sirM or sirN) and reduction steps convert phomalizarine to deacetyl sirodesmin. Finally, acetyltransferase sirH probably acetylates deacetyl sirodesmin to produce sirodesmin PL. In Leptosphaeria maculans (Blackleg fungus), this protein is Probable aminotransferase sirI.